The sequence spans 88 residues: Small ribosomal subunit protein bS16 (88 aa).

The protein belongs to the bacterial ribosomal protein bS16 family.

The chain is Small ribosomal subunit protein bS16 from Pelotomaculum thermopropionicum (strain DSM 13744 / JCM 10971 / SI).